Consider the following 527-residue polypeptide: Transcription initiation factor TFIID subunit 6b (527 aa).

In terms of domain architecture, Histone-fold spans 3–99 (TKESIEVIAQ…NLEPTSGSKS (97 aa)). Disordered regions lie at residues 410 to 442 (SPPT…THQP) and 462 to 492 (MRGT…PKTS). Polar residues-rich tracts occupy residues 416 to 427 (VWKTNGKLTSPR) and 462 to 473 (MRGTTTVPQQSH).

This sequence belongs to the TAF6 family. As to quaternary structure, component of the TFIID complex. TFIID is composed of TATA binding protein (TBP) and a number of TBP-associated factors (TAFs) whose MWs range from 14-217 kDa. Interacts with TAF5 and TAF9. Expressed in roots, leaves, inflorescences and siliques.

The protein resides in the nucleus. Its function is as follows. TAFs are components of the transcription factor IID (TFIID) complex that is essential for mediating regulation of RNA polymerase transcription. Not redundant with TAF6. This is Transcription initiation factor TFIID subunit 6b (TAF6B) from Arabidopsis thaliana (Mouse-ear cress).